A 171-amino-acid chain; its full sequence is Odorant-binding protein 1b (171 aa).

A signal peptide spans 1–19 (MMVKFLLLALVFGLAHVHA). Disulfide bonds link cysteine 57-cysteine 61 and cysteine 76-cysteine 169.

It belongs to the calycin superfamily. Lipocalin family. May form a heterodimer with OBP1A. Post-translationally, the N-terminus may be blocked. In terms of tissue distribution, expressed in nasal mucosa (at protein level). Specifically detected in septal and lateral nasal glands.

The protein resides in the secreted. Functionally, binds the chemical odorant 2-isobutyl-3-methoxypyrazine. In Mus musculus (Mouse), this protein is Odorant-binding protein 1b.